Here is a 469-residue protein sequence, read N- to C-terminus: Glutamate--tRNA ligase (469 aa).

The short motif at 11–21 (PSPTGFIHLGN) is the 'HIGH' region element. Over residues 118-131 (GEKPRYDGTWRPEP) the composition is skewed to basic and acidic residues. Positions 118–138 (GEKPRYDGTWRPEPGKVLPEP) are disordered. The 'KMSKS' region signature appears at 243 to 247 (KMSKR). Lysine 246 is an ATP binding site.

The protein belongs to the class-I aminoacyl-tRNA synthetase family. Glutamate--tRNA ligase type 1 subfamily. Monomer.

It localises to the cytoplasm. The catalysed reaction is tRNA(Glu) + L-glutamate + ATP = L-glutamyl-tRNA(Glu) + AMP + diphosphate. Catalyzes the attachment of glutamate to tRNA(Glu) in a two-step reaction: glutamate is first activated by ATP to form Glu-AMP and then transferred to the acceptor end of tRNA(Glu). In Burkholderia vietnamiensis (strain G4 / LMG 22486) (Burkholderia cepacia (strain R1808)), this protein is Glutamate--tRNA ligase.